The primary structure comprises 176 residues: Shikimate kinase (176 aa).

17-24 (GMMGVGKS) is a binding site for ATP.

The protein belongs to the shikimate kinase family.

The protein localises to the cytoplasm. The enzyme catalyses shikimate + ATP = 3-phosphoshikimate + ADP + H(+). It functions in the pathway metabolic intermediate biosynthesis; chorismate biosynthesis; chorismate from D-erythrose 4-phosphate and phosphoenolpyruvate: step 5/7. The protein is Shikimate kinase of Zymomonas mobilis subsp. mobilis (strain ATCC 31821 / ZM4 / CP4).